The sequence spans 374 residues: MPHKVSLSRLKLTDFRNYAAVSLALDGRHAVLTGNNGAGKTNLMEAVSLLSPGRGLRRAAYGDITRVGAAGGFSIFAALDGMEGEVEIGTGIEAGEETTTRKLRINGTPAKTADELTDHLRLLWLTPAMDGLFTGASSDRRRFLDRLVLSLDPAHGRRASDFERAMRSRNKLLDEGRFDPSWLAGIEEQMASLGIAMALARQEMLGLLARLIEERPESSPFPSASLQLSGFMDGQFSRPSVDLEDEYAAMLAESRYRDASAGRTLDGPHRADLIVHHREKAMEAERCSTGEQKALLVGLVLAHARLVGNLTGHAPILLLDEIAAHLDEGRRAALFDLIDGLGGQAFMTGTDQTMFSALADRAQFFTVADGKVFG.

ATP is bound at residue 34-41 (GNNGAGKT).

Belongs to the RecF family.

It is found in the cytoplasm. Functionally, the RecF protein is involved in DNA metabolism; it is required for DNA replication and normal SOS inducibility. RecF binds preferentially to single-stranded, linear DNA. It also seems to bind ATP. This chain is DNA replication and repair protein RecF, found in Rhizobium etli (strain CIAT 652).